The chain runs to 311 residues: MRGVVWAARRRAGQQWPRSPGPGPGPPPPPPLLLLLLLLLGGASAQYSSDLCSWKGSGLTREAHSKEVEQVYLRCSAGSVEWMYPTGALIVNLRPNTFSPAQNLTVCIKPFRDSSGANIYLEKTGELRLLVRDVRGEPGQVQCFSLEQGGLFVEATPQQDISRRTTGFQYELMSGQRGLDLHVLSAPCRPCSDTEVLLAICTSDFVVRGFIEDVTHVPEQQVSVIHLRVSRLHRQKSRVFQPAPEDSGHWLGHVTTLLQCGVRPGHGEFLFTGHVHFGEAQLGCAPRFSDFQKMYRKAEERGINPCEINME.

An N-terminal signal peptide occupies residues 1–45; sequence MRGVVWAARRRAGQQWPRSPGPGPGPPPPPPLLLLLLLLLGGASA. Cys52 and Cys75 form a disulfide bridge. The N-linked (GlcNAc...) asparagine glycan is linked to Asn103. Intrachain disulfides connect Cys107/Cys143, Cys188/Cys260, Cys191/Cys284, and Cys201/Cys306.

This sequence belongs to the meteorin family. As to expression, abundantly expressed in adipose tissue.

The protein resides in the secreted. Its function is as follows. Hormone induced following exercise or cold exposure that promotes energy expenditure. Induced either in the skeletal muscle after exercise or in adipose tissue following cold exposure and is present in the circulation. Able to stimulate energy expenditure associated with the browning of the white fat depots and improves glucose tolerance. Does not promote an increase in a thermogenic gene program via direct action on adipocytes, but acts by stimulating several immune cell subtypes to enter the adipose tissue and activate their prothermogenic actions. Stimulates an eosinophil-dependent increase in IL4 expression and promotes alternative activation of adipose tissue macrophages, which are required for the increased expression of the thermogenic and anti-inflammatory gene programs in fat. Required for some cold-induced thermogenic responses, suggesting a role in metabolic adaptations to cold temperatures. This is Meteorin-like protein (Metrnl) from Rattus norvegicus (Rat).